Here is a 203-residue protein sequence, read N- to C-terminus: EF-hand calcium-binding domain-containing protein 8 (203 aa).

Residues 61–107 are disordered; sequence SSEKPGESPKPQKMAQPGGSQKKETSRSVPVTDPTSHNSEINQRDQQ. Positions 87–107 are enriched in polar residues; that stretch reads RSVPVTDPTSHNSEINQRDQQ. 2 EF-hand domains span residues 111–145 and 146–181; these read MHLA…VLSS and MSEE…EFQG.

The protein is EF-hand calcium-binding domain-containing protein 8 (Efcab8) of Mus musculus (Mouse).